The following is a 287-amino-acid chain: 4-diphosphocytidyl-2-C-methyl-D-erythritol kinase (287 aa).

The active site involves Lys-22. Position 102-112 (102-112 (PAAAGIGGGSS)) interacts with ATP. Residue Asp-139 is part of the active site.

It belongs to the GHMP kinase family. IspE subfamily.

It catalyses the reaction 4-CDP-2-C-methyl-D-erythritol + ATP = 4-CDP-2-C-methyl-D-erythritol 2-phosphate + ADP + H(+). It functions in the pathway isoprenoid biosynthesis; isopentenyl diphosphate biosynthesis via DXP pathway; isopentenyl diphosphate from 1-deoxy-D-xylulose 5-phosphate: step 3/6. Its function is as follows. Catalyzes the phosphorylation of the position 2 hydroxy group of 4-diphosphocytidyl-2C-methyl-D-erythritol. This Dinoroseobacter shibae (strain DSM 16493 / NCIMB 14021 / DFL 12) protein is 4-diphosphocytidyl-2-C-methyl-D-erythritol kinase.